We begin with the raw amino-acid sequence, 912 residues long: Protein translocase subunit SecA (912 aa).

ATP-binding positions include glutamine 87, 105–109 (GEGKT), and aspartate 512. Cysteine 896, cysteine 898, cysteine 907, and histidine 908 together coordinate Zn(2+).

It belongs to the SecA family. Monomer and homodimer. Part of the essential Sec protein translocation apparatus which comprises SecA, SecYEG and auxiliary proteins SecDF-YajC and YidC. Zn(2+) serves as cofactor.

It is found in the cell inner membrane. The protein resides in the cytoplasm. The enzyme catalyses ATP + H2O + cellular proteinSide 1 = ADP + phosphate + cellular proteinSide 2.. Its function is as follows. Part of the Sec protein translocase complex. Interacts with the SecYEG preprotein conducting channel. Has a central role in coupling the hydrolysis of ATP to the transfer of proteins into and across the cell membrane, serving both as a receptor for the preprotein-SecB complex and as an ATP-driven molecular motor driving the stepwise translocation of polypeptide chains across the membrane. This is Protein translocase subunit SecA from Pseudomonas fluorescens (strain Pf0-1).